The primary structure comprises 327 residues: Glycerol-3-phosphate dehydrogenase [NAD(P)+] (327 aa).

NADPH-binding residues include serine 10, phenylalanine 11, arginine 31, and lysine 108. 3 residues coordinate sn-glycerol 3-phosphate: lysine 108, glycine 136, and serine 138. Alanine 140 contacts NADPH. Residues lysine 191, aspartate 246, serine 256, arginine 257, and asparagine 258 each coordinate sn-glycerol 3-phosphate. Lysine 191 serves as the catalytic Proton acceptor. Arginine 257 provides a ligand contact to NADPH. NADPH contacts are provided by leucine 281 and glutamate 283.

Belongs to the NAD-dependent glycerol-3-phosphate dehydrogenase family.

The protein localises to the cytoplasm. It carries out the reaction sn-glycerol 3-phosphate + NAD(+) = dihydroxyacetone phosphate + NADH + H(+). It catalyses the reaction sn-glycerol 3-phosphate + NADP(+) = dihydroxyacetone phosphate + NADPH + H(+). The protein operates within membrane lipid metabolism; glycerophospholipid metabolism. Its function is as follows. Catalyzes the reduction of the glycolytic intermediate dihydroxyacetone phosphate (DHAP) to sn-glycerol 3-phosphate (G3P), the key precursor for phospholipid synthesis. The protein is Glycerol-3-phosphate dehydrogenase [NAD(P)+] of Ehrlichia ruminantium (strain Welgevonden).